The chain runs to 351 residues: Dihydroorotate dehydrogenase (quinone) (351 aa).

FMN contacts are provided by residues 61–65 (AGLDK) and Thr-85. Substrate is bound at residue Lys-65. 110–114 (NRMGF) provides a ligand contact to substrate. Residues Asn-139 and Asn-172 each coordinate FMN. Asn-172 contacts substrate. Catalysis depends on Ser-175, which acts as the Nucleophile. Asn-177 is a substrate binding site. FMN is bound by residues Lys-217 and Thr-245. Substrate is bound at residue 246-247 (NT). FMN-binding positions include Gly-268, Gly-297, and 318–319 (YS).

It belongs to the dihydroorotate dehydrogenase family. Type 2 subfamily. As to quaternary structure, monomer. FMN is required as a cofactor.

It is found in the cell membrane. The enzyme catalyses (S)-dihydroorotate + a quinone = orotate + a quinol. It participates in pyrimidine metabolism; UMP biosynthesis via de novo pathway; orotate from (S)-dihydroorotate (quinone route): step 1/1. Catalyzes the conversion of dihydroorotate to orotate with quinone as electron acceptor. The sequence is that of Dihydroorotate dehydrogenase (quinone) from Xanthomonas oryzae pv. oryzae (strain PXO99A).